We begin with the raw amino-acid sequence, 319 residues long: BTB/POZ domain-containing adapter for CUL3-mediated RhoA degradation protein 2 (319 aa).

In terms of domain architecture, BTB spans 31–99; that stretch reads KYIRLNVGGC…LRDDTITLPK (69 aa).

It belongs to the BACURD family. As to quaternary structure, component of the BCR(TNFAIP1) E3 ubiquitin ligase complex, at least composed of cul3, tnfaip1/bacurd2 and rbx1.

The protein localises to the cytoplasm. Its subcellular location is the nucleus. The protein resides in the endosome. The protein operates within protein modification; protein ubiquitination. Functionally, substrate-specific adapter of a BCR (BTB-CUL3-RBX1) E3 ubiquitin-protein ligase complex involved in regulation of cytoskeleton structure. The BCR(TNFAIP1) E3 ubiquitin ligase complex mediates the ubiquitination of target proteins, leading to their degradation by the proteasome. This Xenopus tropicalis (Western clawed frog) protein is BTB/POZ domain-containing adapter for CUL3-mediated RhoA degradation protein 2 (tnfaip1).